A 263-amino-acid chain; its full sequence is HTH-type transcriptional repressor NanR (263 aa).

The disordered stretch occupies residues 1-25 (MDVMNAFDSQAEDSPTSLGRSLRRR). The HTH gntR-type domain occupies 30–98 (KKLSEMVEEE…NGERARVSRP (69 aa)). Residues 58 to 77 (ERELMAFFNVGRPSVREALA) constitute a DNA-binding region (H-T-H motif).

Belongs to the NanR family.

Functionally, transcriptional repressor that controls expression of the genes required for the catabolism of sialic acids. This chain is HTH-type transcriptional repressor NanR, found in Salmonella choleraesuis (strain SC-B67).